The primary structure comprises 54 residues: UPF0391 membrane protein BAB1_1670 (54 aa).

2 consecutive transmembrane segments (helical) span residues 5–25 (VLVF…GIAG) and 29–48 (GIAQ…SLIA).

Belongs to the UPF0391 family.

The protein localises to the cell membrane. The chain is UPF0391 membrane protein BAB1_1670 from Brucella abortus (strain 2308).